Here is an 82-residue protein sequence, read N- to C-terminus: Ubiquinol-cytochrome-c reductase complex assembly factor 3 (82 aa).

Over 1 to 6 (METVRR) the chain is Mitochondrial matrix. The helical transmembrane segment at 7–29 (IVKGTLLLGFCTGIGGDLWVLVA) threads the bilayer. The Mitochondrial intermembrane segment spans residues 30-82 (PGQERRLEMRMNYPEANPPMLAEAHKRNEMVLKVIEESAKTNENMARRSPWSS).

This sequence belongs to the UQCC3 family. In terms of assembly, associates with the ubiquinol-cytochrome c reductase complex (mitochondrial respiratory chain complex III or cytochrome b-c1 complex).

Its subcellular location is the mitochondrion inner membrane. Required for the assembly of the ubiquinol-cytochrome c reductase complex (mitochondrial respiratory chain complex III or cytochrome b-c1 complex), mediating cytochrome b recruitment and probably stabilization within the complex. Thereby, plays an important role in ATP production by mitochondria. Cardiolipin-binding protein, it may also control the cardiolipin composition of mitochondria membranes and their morphology. This Xenopus laevis (African clawed frog) protein is Ubiquinol-cytochrome-c reductase complex assembly factor 3.